Consider the following 197-residue polypeptide: Dephospho-CoA kinase (197 aa).

One can recognise a DPCK domain in the interval 3-197 (ILGLTGSIAM…TGCLVGQGSR (195 aa)). Residue 11 to 16 (AMGKST) participates in ATP binding.

It belongs to the CoaE family.

The protein resides in the cytoplasm. It carries out the reaction 3'-dephospho-CoA + ATP = ADP + CoA + H(+). It functions in the pathway cofactor biosynthesis; coenzyme A biosynthesis; CoA from (R)-pantothenate: step 5/5. Functionally, catalyzes the phosphorylation of the 3'-hydroxyl group of dephosphocoenzyme A to form coenzyme A. The chain is Dephospho-CoA kinase from Zymomonas mobilis subsp. mobilis (strain ATCC 31821 / ZM4 / CP4).